Reading from the N-terminus, the 592-residue chain is Arginine--tRNA ligase (592 aa).

Positions 131–141 match the 'HIGH' region motif; it reads ANPTGPMHVGH.

Belongs to the class-I aminoacyl-tRNA synthetase family. Monomer.

It localises to the cytoplasm. It catalyses the reaction tRNA(Arg) + L-arginine + ATP = L-arginyl-tRNA(Arg) + AMP + diphosphate. The polypeptide is Arginine--tRNA ligase (Rhodospirillum rubrum (strain ATCC 11170 / ATH 1.1.1 / DSM 467 / LMG 4362 / NCIMB 8255 / S1)).